A 328-amino-acid polypeptide reads, in one-letter code: Ribosomal RNA small subunit methyltransferase H (328 aa).

S-adenosyl-L-methionine is bound by residues 37–39, Asp-57, Phe-83, Asp-104, and Gln-111; that span reads GGH.

Belongs to the methyltransferase superfamily. RsmH family.

The protein localises to the cytoplasm. The enzyme catalyses cytidine(1402) in 16S rRNA + S-adenosyl-L-methionine = N(4)-methylcytidine(1402) in 16S rRNA + S-adenosyl-L-homocysteine + H(+). Specifically methylates the N4 position of cytidine in position 1402 (C1402) of 16S rRNA. The chain is Ribosomal RNA small subunit methyltransferase H from Neisseria meningitidis serogroup B (strain ATCC BAA-335 / MC58).